Reading from the N-terminus, the 283-residue chain is Diphthine methyl ester synthase (283 aa).

S-adenosyl-L-methionine is bound by residues L9, D84, G87, 112–113, L163, M221, and H246; that span reads SI.

Belongs to the diphthine synthase family.

It localises to the cytoplasm. It carries out the reaction 2-[(3S)-amino-3-carboxypropyl]-L-histidyl-[translation elongation factor 2] + 4 S-adenosyl-L-methionine = diphthine methyl ester-[translation elongation factor 2] + 4 S-adenosyl-L-homocysteine + 3 H(+). It functions in the pathway protein modification; peptidyl-diphthamide biosynthesis. Functionally, S-adenosyl-L-methionine-dependent methyltransferase that catalyzes four methylations of the modified target histidine residue in translation elongation factor 2 (EF-2), to form an intermediate called diphthine methyl ester. The four successive methylation reactions represent the second step of diphthamide biosynthesis. The protein is Diphthine methyl ester synthase (dph5) of Schizosaccharomyces pombe (strain 972 / ATCC 24843) (Fission yeast).